We begin with the raw amino-acid sequence, 261 residues long: 4-phosphopantoate--beta-alanine ligase (261 aa).

ATP-binding positions include Arg-17, Arg-39, 181–183 (DLN), 187–188 (RS), and 199–200 (NI).

Belongs to the archaeal phosphopantothenate synthetase family. As to quaternary structure, homodimer.

The catalysed reaction is (R)-4-phosphopantoate + beta-alanine + ATP = (R)-4'-phosphopantothenate + AMP + diphosphate + H(+). The protein operates within cofactor biosynthesis; coenzyme A biosynthesis. With respect to regulation, activity is not affected by 4'-phosphopantothenate or CoA/acetyl-CoA. Its function is as follows. Catalyzes the condensation of (R)-4-phosphopantoate and beta-alanine to 4'-phosphopantothenate in the CoA biosynthesis pathway. Cannot use (R)-pantoate as substrate and thus does not display pantothenate synthetase (PS) activity. Displays strict specificity for its natural substrates, 4-phosphopantoate, ATP and beta-alanine. This Thermococcus kodakarensis (strain ATCC BAA-918 / JCM 12380 / KOD1) (Pyrococcus kodakaraensis (strain KOD1)) protein is 4-phosphopantoate--beta-alanine ligase.